Here is a 291-residue protein sequence, read N- to C-terminus: Phytanoyl-CoA dioxygenase domain-containing protein 1 (291 aa).

Threonine 55 is subject to Phosphothreonine. 2-oxoglutarate is bound by residues lysine 102, methionine 141, 156-158 (HQD), and tryptophan 174. The Fe cation site is built by histidine 156 and aspartate 158. Residue histidine 246 coordinates Fe cation. Serine 248 and arginine 257 together coordinate 2-oxoglutarate.

The protein belongs to the PhyH family. PHYHD1 subfamily. It depends on Fe cation as a cofactor.

Its activity is regulated as follows. Activity is increased by ascorbate. Inhibited by myristoyl-CoA. 2-oxoglutarate(2OG)-dependent dioxygenase that catalyzes the conversion of 2-oxoglutarate to succinate and CO(2) in an iron-dependent manner. However, does not couple 2OG turnover to the hydroxylation of acyl-coenzyme A derivatives, implying that it is not directly involved in phytanoyl coenzyme-A metabolism. Does not show detectable activity towards fatty acid CoA thioesters. Its function is as follows. Isoform 2 probably lacks enzyme activity. In terms of biological role, isoform 3 probably lacks enzyme activity. The sequence is that of Phytanoyl-CoA dioxygenase domain-containing protein 1 from Homo sapiens (Human).